The chain runs to 123 residues: MANSRRVEKLAALLKREISELLVNGIRDERIHQAMITITSVEVSGDLQHARIFISLFGEEKKKDQVLVGLEEAKGFIRAELARRLQMRRSPELVFKIDKGMTKGPEVLDLLNALELERKSKDL.

The protein belongs to the RbfA family. As to quaternary structure, monomer. Binds 30S ribosomal subunits, but not 50S ribosomal subunits or 70S ribosomes.

The protein resides in the cytoplasm. One of several proteins that assist in the late maturation steps of the functional core of the 30S ribosomal subunit. Associates with free 30S ribosomal subunits (but not with 30S subunits that are part of 70S ribosomes or polysomes). Required for efficient processing of 16S rRNA. May interact with the 5'-terminal helix region of 16S rRNA. The polypeptide is Ribosome-binding factor A (Prochlorococcus marinus (strain NATL1A)).